The sequence spans 369 residues: Dehydrogenase pigH (369 aa).

Residues 13–367 (KAPLLEVKAA…QGVSAKKIVV (355 aa)) enclose the Enoyl reductase (ER) domain. 44 to 49 (IDWLIQ) lines the NADP(+) pocket. N-linked (GlcNAc...) asparagine glycosylation is found at N79 and N101. Residues 197-200 (SRKN) and Y215 each bind NADP(+). A helical transmembrane segment spans residues 280–300 (TIIFFVSWIISFKFKGLLKGI). 360–361 (VS) serves as a coordination point for NADP(+).

The protein belongs to the zinc-containing alcohol dehydrogenase family.

The protein localises to the membrane. It participates in secondary metabolite biosynthesis. Its function is as follows. Dehydrogenase; part of the gene cluster that mediates the biosynthesis of azaphilone pigments (MonAzPs), a complex mixture of compounds with a common azaphilone skeleton very widely used as food colorants. Within the pathway, pigH might be involved in the late steps of yellow pigments monascin and ankaflavin biosynthesis. The first step of the pathway is performed by the nrPKS pigA that forms the hexaketide precursor from successive condensations of five malonyl-CoA units, with a simple acetyl-CoA starter unit. The role of esterase pigG is not clear, but it may play at most a supplementary role in the formation of the benzaldehyde produced by the pigA nrPKS. This very reactive benzaldehyde is intercepted by the pigC ketoreductase that to provide the first stable enzyme-free MonAzPs intermediate, 6-(4-hydroxy-2-oxopentyl)-3-methyl-2,4-dioxocyclohexane carbaldehyde, also known as M7PKS-1. The FAD-dependent monooxygenase pigN hydroxylates M7PKS-1 at C-4, which triggers the formation of the pyran ring. PigJ, pigK and pigD are involved in the acetylation of the pyran ring. PigJ and pigK form the two subunits of a dedicated fungal FAS that produces the side chain fatty acyl moiety of MonAzPs and pigD transfers the fatty acyl chain to the C-4 alcohol. PigM and pigO are involved in the elimination of the omega-1 alcohol. PigM acts as an O-acetyltransferase that synthesizes the putative O-11 acetyl intermediate whereas pigO eliminates acetic acid to yield an intermediate with a C10(11) double bond. The dehydration of the C-11 alcohol followed by the reduction of the C6(7) double bond by the NAD(P)H-dependent oxidoreductase pigE increases the electrophilicity of the C-5 ketone of the resulting acyl benzopyran. This in turn sets up the C-5 ketone for an intramolecular Knoevenagel aldol condensation with the C-20 enol of the side chain. This condensation affords the characteristic linear tricyclic carbon skeletons of the yellow pigments that serve as the common precursors for the classical yellow pigments monascin and ankaflavin, orange pigments rubopunctatin and monascorubrin, and red pigments ribropunctamine and monascorubramine. The FAD-dependent oxidoreductase pigF is especially invoved in the biosynthesis of orange and red pigments via desaturation of C6(7). In Monascus ruber (Mold), this protein is Dehydrogenase pigH.